Here is a 351-residue protein sequence, read N- to C-terminus: Ferredoxin--NADP reductase (351 aa).

The FAD site is built by D44, Q52, Y57, I97, F132, D296, and S337.

The protein belongs to the ferredoxin--NADP reductase type 2 family. Homodimer. FAD serves as cofactor.

The catalysed reaction is 2 reduced [2Fe-2S]-[ferredoxin] + NADP(+) + H(+) = 2 oxidized [2Fe-2S]-[ferredoxin] + NADPH. The sequence is that of Ferredoxin--NADP reductase from Burkholderia vietnamiensis (strain G4 / LMG 22486) (Burkholderia cepacia (strain R1808)).